Consider the following 118-residue polypeptide: Iron-sulfur cluster assembly protein CyaY (118 aa).

Belongs to the frataxin family.

Functionally, involved in iron-sulfur (Fe-S) cluster assembly. May act as a regulator of Fe-S biogenesis. The sequence is that of Iron-sulfur cluster assembly protein CyaY from Buchnera aphidicola subsp. Baizongia pistaciae (strain Bp).